The following is a 2645-amino-acid chain: Non-reducing polyketide synthase AC (2645 aa).

An N-terminal acylcarrier protein transacylase domain (SAT) region spans residues 73-2366 (ALQNLNEWLK…TDIVHNAWPM (2294 aa)). Histidine 260 (proton donor/acceptor; for transacylase activity) is an active-site residue. The Ketosynthase family 3 (KS3) domain occupies 416 to 834 (DDKIAVIGMA…GSNSSLVVTE (419 aa)). Active-site for beta-ketoacyl synthase activity residues include cysteine 583, histidine 718, and histidine 757. Residues 943-1252 (CFGGQISTYI…HAVSITTDKS (310 aa)) are malonyl-CoA:ACP transacylase (MAT) domain. The segment at 1324 to 1457 (SKGFTSFAGY…GVCSFCSATD (134 aa)) is N-terminal hotdog fold. In terms of domain architecture, PKS/mFAS DH spans 1324-1637 (SKGFTSFAGY…YNKVPLPVMR (314 aa)). The segment at 1330–1641 (FAGYIDGNQR…PLPVMRGILG (312 aa)) is product template (PT) domain. Histidine 1359 (proton acceptor; for dehydratase activity) is an active-site residue. The segment at 1487–1637 (NIMQGTANIY…YNKVPLPVMR (151 aa)) is C-terminal hotdog fold. Aspartate 1542 functions as the Proton donor; for dehydratase activity in the catalytic mechanism. Polar residues predominate over residues 1684 to 1696 (NGTTGTENPQIKS). The interval 1684–1716 (NGTTGTENPQIKSKTNKVKKVPTRKSGGSDLET) is disordered. Basic residues predominate over residues 1697–1706 (KTNKVKKVPT). The Carrier domain maps to 1711 to 1788 (GSDLETPAKT…SLVKYIREIR (78 aa)). Serine 1748 carries the O-(pantetheine 4'-phosphoryl)serine modification. Residues 1794–1805 (QNVDDSESESEE) show a composition bias toward acidic residues. The interval 1794–1816 (QNVDDSESESEELQQQATPIDSA) is disordered. The For methyltransferase activity role is filled by tyrosine 2009. The interval 2023–2197 (EVFVEKIGSS…SVGYGHVDWT (175 aa)) is methyltransferase (CMeT) domain. An NADPH-binding (R) domain region spans residues 2269-2573 (CVLITGATGS…NIIPFYDWVQ (305 aa)).

The protein operates within mycotoxin biosynthesis. Non-reducing polyketide synthase; part of the gene cluster that mediates the biosynthesis of the selective antifungal agent ascochitine, an o-quinone methide that plays a possible protective role against other microbial competitors in nature and is considered to be important for pathogenicity of legume-associated Didymella species. The pathway probably begins with the synthesis of a keto-aldehyde intermediate by the ascochitine non-reducing polyketide synthase pksAC from successive condensations of 4 malonyl-CoA units, presumably with a simple acetyl-CoA starter unit. Release of the keto-aldehyde intermediate is consistent with the presence of the C-terminal reductive release domain. The HR-PKS (orf7) probably makes a diketide starter unit which is passed to the non-reducing polyketide synthase pksAC for further extension, producing ascochital and ascochitine. The aldehyde dehydrogenase (orf1), the 2-oxoglutarate-dependent dioxygenase (orf3) and the dehydrogenase (orf9) are probably involved in subsequent oxidations of methyl groups to the carboxylic acid of the heterocyclic ring. The ascochitine gene cluster also includes a gene encoding a short peptide (orf2) that is often found in secondary metabolite gene clusters and which function has still to be determined. The polypeptide is Non-reducing polyketide synthase AC (Didymella fabae (Leaf and pod spot disease fungus)).